A 229-amino-acid polypeptide reads, in one-letter code: Ribonuclease 3 (229 aa).

Residues 5–127 (LSRLERQLGY…LIGAIYLDAG (123 aa)) form the RNase III domain. Glu40 is a binding site for Mg(2+). Asp44 is a catalytic residue. 2 residues coordinate Mg(2+): Asp113 and Glu116. Residue Glu116 is part of the active site. The 71-residue stretch at 154–224 (DPKTRLQEFL…AAAALIALGV (71 aa)) folds into the DRBM domain.

The protein belongs to the ribonuclease III family. Homodimer. Mg(2+) serves as cofactor.

The protein resides in the cytoplasm. It catalyses the reaction Endonucleolytic cleavage to 5'-phosphomonoester.. In terms of biological role, digests double-stranded RNA. Involved in the processing of primary rRNA transcript to yield the immediate precursors to the large and small rRNAs (23S and 16S). Processes some mRNAs, and tRNAs when they are encoded in the rRNA operon. Processes pre-crRNA and tracrRNA of type II CRISPR loci if present in the organism. This chain is Ribonuclease 3, found in Pseudomonas syringae pv. syringae (strain B728a).